A 75-amino-acid chain; its full sequence is Probable protein BRICK1-A (75 aa).

Positions 41 to 72 (MSCRSRLATLNEKLTALERRIEYIEARVTKGE) form a coiled coil.

The protein belongs to the BRK1 family.

It localises to the cytoplasm. The protein resides in the cytoskeleton. In terms of biological role, involved in regulation of actin and microtubule organization. Part of a WAVE complex that activates the Arp2/3 complex. In Xenopus laevis (African clawed frog), this protein is Probable protein BRICK1-A (brk1-a).